The primary structure comprises 277 residues: Proteasome assembly chaperone 1 (277 aa).

This sequence belongs to the PSMG1 family. Forms a heterodimer with psmg2. In terms of processing, degraded by the proteasome upon completion of 20S proteasome maturation.

The protein resides in the cytoplasm. Its subcellular location is the endoplasmic reticulum. Functionally, chaperone protein which promotes assembly of the 20S proteasome as part of a heterodimer with psmg2. The protein is Proteasome assembly chaperone 1 of Danio rerio (Zebrafish).